The primary structure comprises 614 residues: UDP-sugar pyrophosphorylase (614 aa).

The residue at position 2 (Ala2) is an N-acetylalanine.

Belongs to the USP family. It depends on Mg(2+) as a cofactor. Mn(2+) is required as a cofactor. Ubiquitous, but most abundant in rosette leaves, inflorescences, stems, stamens and pollen.

The catalysed reaction is a monosaccharide 1-phosphate + UTP + H(+) = a UDP-monosaccharide + diphosphate. Functionally, required for the synthesis of the intine, the pectocellulosic inner wall of developing pollen. May function as the terminal enzyme of the myo-inositol oxidation (MIO) pathway. May also play a role in the salvage pathway for synthesis of nucleotide sugars. Can use a wide range of substrates including glucose-1-phosphate, galactose-1-phosphate, xylose-1-phosphate, arabinose-1-phosphate and glucuronate-1-phosphate. This Arabidopsis thaliana (Mouse-ear cress) protein is UDP-sugar pyrophosphorylase (USP).